Reading from the N-terminus, the 407-residue chain is O-antigen polymerase (407 aa).

11 helical membrane-spanning segments follow: residues 2-22 (LIIS…TLSV), 31-51 (VMVP…GIFV), 63-83 (YLFF…SYLY), 101-121 (YVFT…PVLM), 141-161 (YGIY…CAFF), 168-185 (LFCI…FLHG), 190-204 (IFSI…LSYI), 211-231 (FMFL…FFAY), 319-339 (ADFG…KGVL), 356-376 (FIMF…GWLF), and 382-402 (IAFM…RFVL).

The protein resides in the cell inner membrane. The catalysed reaction is n lipid-linked O-antigen repeat units = a lipid-linked O antigen + (n-1) polyisoprenyl diphosphate.. Its pathway is bacterial outer membrane biogenesis; LPS O-antigen biosynthesis. Functionally, polymerase involved in the biosynthesis of the lipopolysaccharide (LPS). Catalyzes the polymerization of the O-antigen repeat units on the periplasmic face of the inner membrane, leading to the formation of the lipid-linked O-antigen molecule. The chain is O-antigen polymerase (rfc) from Salmonella typhi.